We begin with the raw amino-acid sequence, 194 residues long: Inosine triphosphate pyrophosphatase (194 aa).

8–13 (TGNANK) is an ITP binding site. Glutamate 47 contacts Mg(2+). ITP contacts are provided by residues lysine 59, 75–76 (DT), lysine 92, 151–154 (FGWD), lysine 174, and 179–180 (HR).

Belongs to the HAM1 NTPase family. Homodimer. Mg(2+) serves as cofactor. It depends on Mn(2+) as a cofactor.

It is found in the cytoplasm. It localises to the nucleus. It carries out the reaction ITP + H2O = IMP + diphosphate + H(+). The catalysed reaction is dITP + H2O = dIMP + diphosphate + H(+). It catalyses the reaction XTP + H2O = XMP + diphosphate + H(+). In terms of biological role, pyrophosphatase that hydrolyzes non-canonical purine nucleotides such as inosine triphosphate (ITP), deoxyinosine triphosphate (dITP) or xanthosine 5'-triphosphate (XTP) to their respective monophosphate derivatives. The enzyme does not distinguish between the deoxy- and ribose forms. Probably excludes non-canonical purines from RNA and DNA precursor pools, thus preventing their incorporation into RNA and DNA and avoiding chromosomal lesions. In Scheffersomyces stipitis (strain ATCC 58785 / CBS 6054 / NBRC 10063 / NRRL Y-11545) (Yeast), this protein is Inosine triphosphate pyrophosphatase.